The chain runs to 101 residues: MSQKIRIKLKSYDYMLVDKSAEKIVKTVKAAGAMVSGPIPLPTHKRIFTVNRSTFVNKKSREQFELSSYKRLIDIYNSTAKTVDALMKLELPSGVEVEIKV.

Belongs to the universal ribosomal protein uS10 family. In terms of assembly, part of the 30S ribosomal subunit.

Its function is as follows. Involved in the binding of tRNA to the ribosomes. This is Small ribosomal subunit protein uS10 from Porphyromonas gingivalis (strain ATCC 33277 / DSM 20709 / CIP 103683 / JCM 12257 / NCTC 11834 / 2561).